A 560-amino-acid polypeptide reads, in one-letter code: Probable methionine--tRNA ligase, cytoplasmic (560 aa).

Residues 16–26 (PYVNNQPHLGN) carry the 'HIGH' region motif. Residues 347–351 (KFSKS) carry the 'KMSKS' region motif. Residue Lys350 coordinates ATP.

This sequence belongs to the class-I aminoacyl-tRNA synthetase family.

The protein resides in the cytoplasm. It catalyses the reaction tRNA(Met) + L-methionine + ATP = L-methionyl-tRNA(Met) + AMP + diphosphate. The sequence is that of Probable methionine--tRNA ligase, cytoplasmic from Vairimorpha ceranae (strain BRL01) (Microsporidian parasite).